The sequence spans 218 residues: Large ribosomal subunit protein uL3 (218 aa).

The interval 137 to 157 is disordered; the sequence is GVGASHGAHKNHRKPGSIGGA.

This sequence belongs to the universal ribosomal protein uL3 family. Part of the 50S ribosomal subunit. Forms a cluster with proteins L14 and L19.

In terms of biological role, one of the primary rRNA binding proteins, it binds directly near the 3'-end of the 23S rRNA, where it nucleates assembly of the 50S subunit. This chain is Large ribosomal subunit protein uL3, found in Kocuria rhizophila (strain ATCC 9341 / DSM 348 / NBRC 103217 / DC2201).